A 351-amino-acid chain; its full sequence is UDP-N-acetylglucosamine--N-acetylmuramyl-(pentapeptide) pyrophosphoryl-undecaprenol N-acetylglucosamine transferase (351 aa).

UDP-N-acetyl-alpha-D-glucosamine-binding positions include T13–G15, N125, R161, S189, I241, A260–E265, and Q285.

This sequence belongs to the glycosyltransferase 28 family. MurG subfamily.

The protein localises to the cell inner membrane. It catalyses the reaction di-trans,octa-cis-undecaprenyl diphospho-N-acetyl-alpha-D-muramoyl-L-alanyl-D-glutamyl-meso-2,6-diaminopimeloyl-D-alanyl-D-alanine + UDP-N-acetyl-alpha-D-glucosamine = di-trans,octa-cis-undecaprenyl diphospho-[N-acetyl-alpha-D-glucosaminyl-(1-&gt;4)]-N-acetyl-alpha-D-muramoyl-L-alanyl-D-glutamyl-meso-2,6-diaminopimeloyl-D-alanyl-D-alanine + UDP + H(+). It participates in cell wall biogenesis; peptidoglycan biosynthesis. Its function is as follows. Cell wall formation. Catalyzes the transfer of a GlcNAc subunit on undecaprenyl-pyrophosphoryl-MurNAc-pentapeptide (lipid intermediate I) to form undecaprenyl-pyrophosphoryl-MurNAc-(pentapeptide)GlcNAc (lipid intermediate II). This is UDP-N-acetylglucosamine--N-acetylmuramyl-(pentapeptide) pyrophosphoryl-undecaprenol N-acetylglucosamine transferase from Haemophilus influenzae (strain PittGG).